The following is a 394-amino-acid chain: Ribulose bisphosphate carboxylase large chain (394 aa).

Position 5 is an N6,N6,N6-trimethyllysine (K5). Substrate is bound by residues N114 and T164. K166 (proton acceptor) is an active-site residue. K168 serves as a coordination point for substrate. K192, D194, and E195 together coordinate Mg(2+). N6-carboxylysine is present on K192. H285 serves as the catalytic Proton acceptor. 3 residues coordinate substrate: R286, H318, and S370.

This sequence belongs to the RuBisCO large chain family. Type I subfamily. As to quaternary structure, heterohexadecamer of 8 large chains and 8 small chains. Requires Mg(2+) as cofactor.

It localises to the plastid. Its subcellular location is the chloroplast. The enzyme catalyses 2 (2R)-3-phosphoglycerate + 2 H(+) = D-ribulose 1,5-bisphosphate + CO2 + H2O. The catalysed reaction is D-ribulose 1,5-bisphosphate + O2 = 2-phosphoglycolate + (2R)-3-phosphoglycerate + 2 H(+). RuBisCO catalyzes two reactions: the carboxylation of D-ribulose 1,5-bisphosphate, the primary event in carbon dioxide fixation, as well as the oxidative fragmentation of the pentose substrate in the photorespiration process. Both reactions occur simultaneously and in competition at the same active site. In Nymphaea odorata (White water lily), this protein is Ribulose bisphosphate carboxylase large chain (rbcL).